The primary structure comprises 226 residues: UPF0173 metal-dependent hydrolase GTNG_2675 (226 aa).

It belongs to the UPF0173 family.

In Geobacillus thermodenitrificans (strain NG80-2), this protein is UPF0173 metal-dependent hydrolase GTNG_2675.